We begin with the raw amino-acid sequence, 225 residues long: Uridylate kinase (225 aa).

9–10 lines the ATP pocket; it reads GS. Glycine 44 provides a ligand contact to UMP. The ATP site is built by glycine 45 and arginine 49. UMP contacts are provided by residues aspartate 66 and 114 to 120; that span reads THPGHTT. ATP-binding residues include threonine 140, asparagine 141, tyrosine 146, and aspartate 149.

Belongs to the UMP kinase family. In terms of assembly, homohexamer.

The protein localises to the cytoplasm. The enzyme catalyses UMP + ATP = UDP + ADP. Its pathway is pyrimidine metabolism; CTP biosynthesis via de novo pathway; UDP from UMP (UMPK route): step 1/1. Inhibited by UTP. Its function is as follows. Catalyzes the reversible phosphorylation of UMP to UDP. This Thermococcus onnurineus (strain NA1) protein is Uridylate kinase.